The chain runs to 161 residues: Thy-1 membrane glycoprotein (161 aa).

Residues 1-19 (MNLAISIALLLTVLQVSRG) form the signal peptide. Position 20 is a pyrrolidone carboxylic acid (Gln20). Residues 20-126 (QKVTSLTACL…SQNVTVLRDK (107 aa)) enclose the Ig-like V-type domain. 2 disulfides stabilise this stretch: Cys28-Cys130 and Cys38-Cys104. N-linked (GlcNAc...) asparagine glycans are attached at residues Asn42 and Asn79. Phosphoserine is present on Ser82. N-linked (GlcNAc...) asparagine glycosylation occurs at Asn119. Cys130 is lipidated: GPI-anchor amidated cysteine; alternate. The propeptide at 131 to 161 (EGISLLAQNTSWLLLLLLSLSLLQATDFMSL) is removed in mature form. N-linked (GlcNAc...) asparagine glycosylation occurs at Asn139.

The protein localises to the cell membrane. May play a role in cell-cell or cell-ligand interactions during synaptogenesis and other events in the brain. The polypeptide is Thy-1 membrane glycoprotein (THY1) (Homo sapiens (Human)).